The following is a 714-amino-acid chain: Hormonally up-regulated neu tumor-associated kinase (714 aa).

A compositionally biased stretch (low complexity) spans 1–16; the sequence is MPAAAGDGLLGEPAAP. Residues 1 to 28 are disordered; that stretch reads MPAAAGDGLLGEPAAPGGDGGAEDTTRP. A Protein kinase domain is found at 62–320; sequence LIGSRKLGEG…IQQALANRWL (259 aa). ATP is bound by residues 68–76 and K91; that span reads LGEGSFAKV. The Proton acceptor role is filled by D186. Positions 624-635 are enriched in basic and acidic residues; that stretch reads HEEKNSPPKEEG. 2 disordered regions span residues 624 to 658 and 674 to 714; these read HEEK…NCVK and KRHQ…KGQC. Positions 692–703 are enriched in polar residues; that stretch reads SPLQPTAPSSLS.

The protein belongs to the protein kinase superfamily. CAMK Ser/Thr protein kinase family. SNF1 subfamily.

It carries out the reaction L-seryl-[protein] + ATP = O-phospho-L-seryl-[protein] + ADP + H(+). It catalyses the reaction L-threonyl-[protein] + ATP = O-phospho-L-threonyl-[protein] + ADP + H(+). The protein is Hormonally up-regulated neu tumor-associated kinase (Hunk) of Mus musculus (Mouse).